The primary structure comprises 502 residues: ATP synthase subunit alpha, chloroplastic (502 aa).

Residue 170–177 (GDRQTGKT) participates in ATP binding.

It belongs to the ATPase alpha/beta chains family. In terms of assembly, F-type ATPases have 2 components, CF(1) - the catalytic core - and CF(0) - the membrane proton channel. CF(1) has five subunits: alpha(3), beta(3), gamma(1), delta(1), epsilon(1). CF(0) has four main subunits: a, b, b' and c.

It localises to the plastid. It is found in the chloroplast thylakoid membrane. It carries out the reaction ATP + H2O + 4 H(+)(in) = ADP + phosphate + 5 H(+)(out). In terms of biological role, produces ATP from ADP in the presence of a proton gradient across the membrane. The alpha chain is a regulatory subunit. The sequence is that of ATP synthase subunit alpha, chloroplastic from Rhodomonas salina (Cryptomonas salina).